The chain runs to 606 residues: Threonine--tRNA ligase (606 aa).

Residues 212–503 (DHRKLGVEMK…LIEHTAGELP (292 aa)) form a catalytic region. 3 residues coordinate Zn(2+): C304, H355, and H480.

The protein belongs to the class-II aminoacyl-tRNA synthetase family. Homodimer. Requires Zn(2+) as cofactor.

It localises to the cytoplasm. It carries out the reaction tRNA(Thr) + L-threonine + ATP = L-threonyl-tRNA(Thr) + AMP + diphosphate + H(+). In terms of biological role, catalyzes the attachment of threonine to tRNA(Thr) in a two-step reaction: L-threonine is first activated by ATP to form Thr-AMP and then transferred to the acceptor end of tRNA(Thr). Also edits incorrectly charged L-seryl-tRNA(Thr). This Campylobacter curvus (strain 525.92) protein is Threonine--tRNA ligase.